The sequence spans 811 residues: Glycerol-3-phosphate acyltransferase (811 aa).

Positions 305–310 match the HXXXXD motif motif; it reads CHRSHI.

This sequence belongs to the GPAT/DAPAT family.

The protein resides in the cell inner membrane. The enzyme catalyses sn-glycerol 3-phosphate + an acyl-CoA = a 1-acyl-sn-glycero-3-phosphate + CoA. It functions in the pathway phospholipid metabolism; CDP-diacylglycerol biosynthesis; CDP-diacylglycerol from sn-glycerol 3-phosphate: step 1/3. The sequence is that of Glycerol-3-phosphate acyltransferase from Histophilus somni (strain 129Pt) (Haemophilus somnus).